Reading from the N-terminus, the 345-residue chain is S-adenosylmethionine:tRNA ribosyltransferase-isomerase (345 aa).

This sequence belongs to the QueA family. In terms of assembly, monomer.

The protein localises to the cytoplasm. The catalysed reaction is 7-aminomethyl-7-carbaguanosine(34) in tRNA + S-adenosyl-L-methionine = epoxyqueuosine(34) in tRNA + adenine + L-methionine + 2 H(+). The protein operates within tRNA modification; tRNA-queuosine biosynthesis. Transfers and isomerizes the ribose moiety from AdoMet to the 7-aminomethyl group of 7-deazaguanine (preQ1-tRNA) to give epoxyqueuosine (oQ-tRNA). The polypeptide is S-adenosylmethionine:tRNA ribosyltransferase-isomerase (Shewanella baltica (strain OS155 / ATCC BAA-1091)).